The chain runs to 364 residues: Ribosomal RNA large subunit methyltransferase M (364 aa).

S-adenosyl-L-methionine contacts are provided by residues S194, 227–230 (CPGG), D246, D266, and D284. Residue K313 is the Proton acceptor of the active site.

Belongs to the class I-like SAM-binding methyltransferase superfamily. RNA methyltransferase RlmE family. RlmM subfamily. In terms of assembly, monomer.

The protein resides in the cytoplasm. It carries out the reaction cytidine(2498) in 23S rRNA + S-adenosyl-L-methionine = 2'-O-methylcytidine(2498) in 23S rRNA + S-adenosyl-L-homocysteine + H(+). Its function is as follows. Catalyzes the 2'-O-methylation at nucleotide C2498 in 23S rRNA. In Actinobacillus succinogenes (strain ATCC 55618 / DSM 22257 / CCUG 43843 / 130Z), this protein is Ribosomal RNA large subunit methyltransferase M.